Here is a 112-residue protein sequence, read N- to C-terminus: MAM and fibronectin type III domain-containing protein 2 (112 aa).

As to expression, component of the acid-insoluble and acid-soluble organic matrix of the aragonitic skeleton (at protein level).

The protein resides in the secreted. The chain is MAM and fibronectin type III domain-containing protein 2 from Acropora millepora (Staghorn coral).